The chain runs to 860 residues: LPS-assembly protein LptD (860 aa).

Positions Met1 to Ala21 are cleaved as a signal peptide.

It belongs to the LptD family. As to quaternary structure, component of the lipopolysaccharide transport and assembly complex. Interacts with LptE and LptA.

It localises to the cell outer membrane. In terms of biological role, together with LptE, is involved in the assembly of lipopolysaccharide (LPS) at the surface of the outer membrane. The chain is LPS-assembly protein LptD from Saccharophagus degradans (strain 2-40 / ATCC 43961 / DSM 17024).